A 572-amino-acid chain; its full sequence is Probable cysteine--tRNA ligase, mitochondrial (572 aa).

Zn(2+) is bound at residue cysteine 81. Position 82 (glycine 82) interacts with L-cysteine. The 'HIGH' region signature appears at 83-93 (PTVYDHAHLGH). Threonine 122 contacts L-cysteine. Residues 127–130 (KIIK) carry the 'KIIK' region motif. The Zn(2+) site is built by cysteine 260, histidine 285, and glutamate 289. Residue histidine 285 coordinates L-cysteine. Residues 320-324 (KMSKS) carry the 'KMSKS' region motif. Residue lysine 323 coordinates ATP.

Belongs to the class-I aminoacyl-tRNA synthetase family. Requires Zn(2+) as cofactor.

The protein resides in the mitochondrion. The catalysed reaction is tRNA(Cys) + L-cysteine + ATP = L-cysteinyl-tRNA(Cys) + AMP + diphosphate. The enzyme catalyses 2 L-cysteine = S-sulfanyl-L-cysteine + L-alanine. It catalyses the reaction S-sulfanyl-L-cysteine + L-cysteine = S-disulfanyl-L-cysteine + L-alanine. It carries out the reaction S-sulfanyl-L-cysteine + tRNA(Cys) + ATP = (S)-sulfanyl-L-cysteinyl-tRNA(Cys) + AMP + diphosphate. The catalysed reaction is S-disulfanyl-L-cysteine + tRNA(Cys) + ATP = (S)-disulfanyl-L-cysteinyl-tRNA(Cys) + AMP + diphosphate. Functionally, mitochondrial cysteine-specific aminoacyl-tRNA synthetase that catalyzes the ATP-dependent ligation of cysteine to tRNA(Cys). In terms of biological role, in addition to its role as an aminoacyl-tRNA synthetase, has also cysteine persulfide synthase activity. Produces reactive persulfide species such as cysteine persulfide (CysSSH) from substrate cysteine and mediate direct incorporation of CysSSH into proteins during translations, resulting in protein persulfides and polysulfides. CysSSHs behave as potent antioxidants and cellular protectants. The polypeptide is Probable cysteine--tRNA ligase, mitochondrial (cars2) (Xenopus tropicalis (Western clawed frog)).